The sequence spans 435 residues: S-phase entry cyclin-5 (435 aa).

2 disordered regions span residues 36–70 and 104–126; these read KRAL…NPLS and NDRT…DAAS. Low complexity predominate over residues 41 to 52; the sequence is KNDSSSKQQVQD. Residues 110–124 are compositionally biased toward acidic residues; sequence EQEEEEEEEGEDDDA.

Belongs to the cyclin family. Cyclin AB subfamily.

Functionally, required for efficient progression through S phase and possibly for the normal progression through meiosis. Interacts with CDC28. In Saccharomyces cerevisiae (strain ATCC 204508 / S288c) (Baker's yeast), this protein is S-phase entry cyclin-5 (CLB5).